A 156-amino-acid polypeptide reads, in one-letter code: MNLNATLIGQLIAFALFVWFCMKFVWPPIINAIETRQSQIANALASAEAAKKEQADTKNLVEQELSAAKLQAQDILDAANKRRNEVLDEVKAEAEELKAKIIAQGYAEVEAERKRVQEELRLKVASLAVAGAEKIVGRSIDEAANNDIIDKLVAEL.

The helical transmembrane segment at 11-31 (LIAFALFVWFCMKFVWPPIIN) threads the bilayer.

Belongs to the ATPase B chain family. In terms of assembly, F-type ATPases have 2 components, F(1) - the catalytic core - and F(0) - the membrane proton channel. F(1) has five subunits: alpha(3), beta(3), gamma(1), delta(1), epsilon(1). F(0) has three main subunits: a(1), b(2) and c(10-14). The alpha and beta chains form an alternating ring which encloses part of the gamma chain. F(1) is attached to F(0) by a central stalk formed by the gamma and epsilon chains, while a peripheral stalk is formed by the delta and b chains.

It is found in the cell inner membrane. Functionally, f(1)F(0) ATP synthase produces ATP from ADP in the presence of a proton or sodium gradient. F-type ATPases consist of two structural domains, F(1) containing the extramembraneous catalytic core and F(0) containing the membrane proton channel, linked together by a central stalk and a peripheral stalk. During catalysis, ATP synthesis in the catalytic domain of F(1) is coupled via a rotary mechanism of the central stalk subunits to proton translocation. In terms of biological role, component of the F(0) channel, it forms part of the peripheral stalk, linking F(1) to F(0). The protein is ATP synthase subunit b of Haemophilus influenzae (strain 86-028NP).